The chain runs to 345 residues: uncharacterized protein (345 aa).

Residues 1–98 (MNDEMKGKSG…ISGKSFIDPE (98 aa)) form a disordered region. Basic and acidic residues-rich tracts occupy residues 18–27 (RSDDDSDKRT), 42–68 (SRAD…EDSP), and 76–86 (PGDETPEKADH).

This sequence belongs to the class IV-like SAM-binding methyltransferase superfamily. RNA methyltransferase TrmH family.

This is an uncharacterized protein from Escherichia coli O157:H7.